The chain runs to 133 residues: VISGFYPDSVQVSWKKDRVDQSGVVLHSKQRNDSTFETVSYLTVPVVEWTTGDVYTCEVSHTGSRFNDRISMRYQKGGTVNLPVPGGNTPCTCPPSSCSGCMPKLVYQTDLNVTLENGGQLQYNCHQQACKIK.

The 71-residue stretch at 1–71 folds into the Ig-like domain; it reads VISGFYPDSV…TGSRFNDRIS (71 aa). N32 and N112 each carry an N-linked (GlcNAc...) asparagine glycan. Residues 76 to 133 are secretory tail; sequence KGGTVNLPVPGGNTPCTCPPSSCSGCMPKLVYQTDLNVTLENGGQLQYNCHQQACKIK.

As to expression, expressed mainly in lymphoid tissues including spleen, epigonal organ and circulating lymphocytes.

The protein resides in the secreted. This is IgW chain C region, secreted form 2 from Heterodontus francisci (Horn shark).